The primary structure comprises 160 residues: MAKYEIMLVVRGDLDQEQANKVANELKATLKNTEVKENNYEGVQQLAYEINKLKTAYRYVYNFETTDVSLINEFRRLAIINKNVLRHIIINLEKDYGYKATVNAKKVQRNEKRAEVYVRQKEEAERRAAERQAAYEAMKAEREAAGLPVKEFVKGANSKR.

It belongs to the bacterial ribosomal protein bS6 family.

Functionally, binds together with bS18 to 16S ribosomal RNA. The sequence is that of Small ribosomal subunit protein bS6 from Ureaplasma urealyticum serovar 10 (strain ATCC 33699 / Western).